The following is a 60-amino-acid chain: MMVKNTIDVKEILRELDTTRIKDYPLMSGKEILLRTNFKGCCGMPSQISQLNLKEQLESC.

This is an uncharacterized protein from Methanocaldococcus jannaschii (strain ATCC 43067 / DSM 2661 / JAL-1 / JCM 10045 / NBRC 100440) (Methanococcus jannaschii).